We begin with the raw amino-acid sequence, 192 residues long: U1 small nuclear ribonucleoprotein C (192 aa).

The Matrin-type zinc finger occupies 4 to 36 (YYCEYCDIYLTHSSPVGRRQHNQGRKHISAKIE). The disordered stretch occupies residues 118–192 (PGANKYPNNN…FVNKNSEQPN (75 aa)). Positions 133-154 (RISNTPKPYNNYTNKPITNSPY) are enriched in polar residues. The segment covering 164-173 (NNENSNNFSN) has biased composition (low complexity). Residues 174 to 192 (YQMNKDNSNFVNKNSEQPN) are compositionally biased toward polar residues.

Belongs to the U1 small nuclear ribonucleoprotein C family. As to quaternary structure, U1 snRNP is composed of the 7 core Sm proteins B/B', D1, D2, D3, E, F and G that assemble in a heptameric protein ring on the Sm site of the small nuclear RNA to form the core snRNP, and at least 3 U1 snRNP-specific proteins U1-70K, U1-A and U1-C. U1-C interacts with U1 snRNA and the 5' splice-site region of the pre-mRNA.

The protein resides in the nucleus. In terms of biological role, component of the spliceosomal U1 snRNP, which is essential for recognition of the pre-mRNA 5' splice-site and the subsequent assembly of the spliceosome. U1-C is directly involved in initial 5' splice-site recognition for both constitutive and regulated alternative splicing. The interaction with the 5' splice-site seems to precede base-pairing between the pre-mRNA and the U1 snRNA. Stimulates commitment or early (E) complex formation by stabilizing the base pairing of the 5' end of the U1 snRNA and the 5' splice-site region. This chain is U1 small nuclear ribonucleoprotein C, found in Plasmodium chabaudi chabaudi.